Here is a 162-residue protein sequence, read N- to C-terminus: Type IV major fimbrial protein FimA (162 aa).

Positions 1–7 (MKSLQKG) are cleaved as a propeptide — leader sequence. Position 8 is an N-methylphenylalanine (phenylalanine 8). A helical transmembrane segment spans residues 8–28 (FTLIELMIVVAIIGILAAFAI). The cysteines at positions 63 and 106 are disulfide-linked.

Belongs to the N-Me-Phe pilin family.

It is found in the fimbrium. The protein localises to the membrane. Major component of the type IV fimbriae that plays an essential role in twitching motility, natural transformation, and protease secretion. This is Type IV major fimbrial protein FimA (fimA) from Dichelobacter nodosus (strain VCS1703A).